The chain runs to 1238 residues: DNA-directed RNA polymerase subunit beta (1238 aa).

Positions 1186–1238 (IEGREDTPPEEVYEEGYEEGFEEESEELPEDIDFEPDSFDIENDDLDLEDFDI) are disordered. Acidic residues predominate over residues 1193 to 1238 (PPEEVYEEGYEEGFEEESEELPEDIDFEPDSFDIENDDLDLEDFDI).

Belongs to the RNA polymerase beta chain family. The RNAP catalytic core consists of 2 alpha, 1 beta, 1 beta' and 1 omega subunit. When a sigma factor is associated with the core the holoenzyme is formed, which can initiate transcription.

The catalysed reaction is RNA(n) + a ribonucleoside 5'-triphosphate = RNA(n+1) + diphosphate. Its function is as follows. DNA-dependent RNA polymerase catalyzes the transcription of DNA into RNA using the four ribonucleoside triphosphates as substrates. This is DNA-directed RNA polymerase subunit beta from Thermoanaerobacter sp. (strain X514).